A 304-amino-acid chain; its full sequence is Homoserine O-acetyltransferase (304 aa).

The active-site Acyl-thioester intermediate is cysteine 142. Positions 163 and 192 each coordinate substrate. The Proton acceptor role is filled by histidine 235. The active site involves glutamate 237. Arginine 249 is a substrate binding site.

Belongs to the MetA family.

The protein localises to the cytoplasm. It catalyses the reaction L-homoserine + acetyl-CoA = O-acetyl-L-homoserine + CoA. The protein operates within amino-acid biosynthesis; L-methionine biosynthesis via de novo pathway; O-acetyl-L-homoserine from L-homoserine: step 1/1. Transfers an acetyl group from acetyl-CoA to L-homoserine, forming acetyl-L-homoserine. The chain is Homoserine O-acetyltransferase from Clostridium beijerinckii (strain ATCC 51743 / NCIMB 8052) (Clostridium acetobutylicum).